Reading from the N-terminus, the 87-residue chain is MFKVYGYDSNIHKCVYCDNAKRLLTVKKQPFEFINIMPEKGVFDDEKIAELLTKLGRDTQIGLTMPQVFAPDGSHIGGFDQLREYFK.

Residues 1 to 87 (MFKVYGYDSN…GFDQLREYFK (87 aa)) form the Glutaredoxin domain. A disulfide bond links C14 and C17.

Belongs to the glutaredoxin family.

Its function is as follows. Serves as a reducing agent for the phage-induced ribonucleotide reductase, but not for the bacterial ones. This specificity may be the result of sequence differences around the redox-active disulfide bond. The oxidized form accepts electrons from bacterial glutathione and will, in turn, reduce other small disulfides. Can also be reduced by NADPH and by bacterial thioredoxin reductase. In Enterobacteria phage T4 (Bacteriophage T4), this protein is Glutaredoxin (NRDC).